Here is a 201-residue protein sequence, read N- to C-terminus: Small ribosomal subunit protein uS4 (201 aa).

The region spanning 91 to 151 (SRLDNVVYRA…EKSQKMNWFE (61 aa)) is the S4 RNA-binding domain.

It belongs to the universal ribosomal protein uS4 family. Part of the 30S ribosomal subunit. Contacts protein S5. The interaction surface between S4 and S5 is involved in control of translational fidelity.

In terms of biological role, one of the primary rRNA binding proteins, it binds directly to 16S rRNA where it nucleates assembly of the body of the 30S subunit. With S5 and S12 plays an important role in translational accuracy. In Corynebacterium glutamicum (strain R), this protein is Small ribosomal subunit protein uS4.